A 764-amino-acid polypeptide reads, in one-letter code: Calpain-like protease palB/RIM13 (764 aa).

A Calpain catalytic domain is found at 95–368; that stretch reads GEFYPPLTVY…FKYFYINWNP (274 aa). Residues Cys165, His318, and Asn336 contribute to the active site.

It belongs to the peptidase C2 family. PalB/RIM13 subfamily.

Its function is as follows. Required for the proteolytic cleavage of the transcription factor RIM101 in response to alkaline ambient pH. In Debaryomyces hansenii (strain ATCC 36239 / CBS 767 / BCRC 21394 / JCM 1990 / NBRC 0083 / IGC 2968) (Yeast), this protein is Calpain-like protease palB/RIM13.